Consider the following 225-residue polypeptide: Uridylate kinase (225 aa).

An ATP-binding site is contributed by 9 to 10; that stretch reads GS. Residue glycine 46 coordinates UMP. ATP is bound by residues glycine 47 and arginine 51. UMP-binding positions include aspartate 67 and 115–121; that span reads THPAHTT. 4 residues coordinate ATP: threonine 141, asparagine 142, tyrosine 147, and aspartate 150.

The protein belongs to the UMP kinase family. Homohexamer.

Its subcellular location is the cytoplasm. It catalyses the reaction UMP + ATP = UDP + ADP. The protein operates within pyrimidine metabolism; CTP biosynthesis via de novo pathway; UDP from UMP (UMPK route): step 1/1. Inhibited by UTP. Catalyzes the reversible phosphorylation of UMP to UDP. The sequence is that of Uridylate kinase from Methanococcus maripaludis (strain C5 / ATCC BAA-1333).